Consider the following 540-residue polypeptide: Mitochondrial antiviral-signaling protein (540 aa).

Position 2 is an N-acetylproline (Pro-2). Topologically, residues 2–513 (PFAEDKTYKY…REVPCHRPSP (512 aa)) are cytoplasmic. Glycyl lysine isopeptide (Lys-Gly) (interchain with G-Cter in ubiquitin) cross-links involve residues Lys-7 and Lys-10. One can recognise a CARD domain in the interval 10-77 (KYICRNFSNF…WVEYFIAALR (68 aa)). The segment at 10-77 (KYICRNFSNF…WVEYFIAALR (68 aa)) is required for interaction with NLRX1. Residue Cys-79 is the site of S-palmitoyl cysteine attachment. The disordered stretch occupies residues 95-297 (YQPRTSDRPP…EAPANSLPSK (203 aa)). Residues 106-122 (PLEPPSLPAERPGPPTP) are compositionally biased toward pro residues. The interaction with TRAF2 stretch occupies residues 143 to 147 (PVQET). 2 stretches are compositionally biased toward polar residues: residues 145 to 165 (QETQAPESPGENSEQALQTLS) and 179 to 216 (ESSSDLAALSPLTSSGHQEQDTELGSTHTAGATSSLTP). Phosphoserine occurs at positions 152, 157, 165, 180, and 188. The interaction with TRAF6 stretch occupies residues 153-158 (PGENSE). A Phosphothreonine modification is found at Thr-215. 2 positions are modified to phosphoserine: Ser-222 and Ser-233. At Thr-234 the chain carries Phosphothreonine. Position 236 is an asymmetric dimethylarginine (Arg-236). A compositionally biased stretch (low complexity) spans 241 to 266 (PGPTGSVVSTGTSFSSSSPGLASAGA). A phosphoserine mark is found at Ser-253 and Ser-258. Glycyl lysine isopeptide (Lys-Gly) (interchain with G-Cter in ubiquitin) cross-links involve residues Lys-311 and Lys-325. 2 disordered regions span residues 314–358 (ANPA…RAGM) and 373–419 (SAST…SELS). Polar residues-rich tracts occupy residues 317-331 (ASVSTVPSKLPTSSK), 339-355 (NALTNPAPSKLPINSTR), and 373-382 (SASTVPTDGS). Residues 388-403 (TPAAPTPAGATGGSSA) are compositionally biased toward low complexity. A Phosphoserine modification is found at Ser-408. Residues 439–442 (LAIS) carry the pLxIS motif motif. The residue at position 442 (Ser-442) is a Phosphoserine; by TBK1. The interaction with TRAF6 stretch occupies residues 455–460 (PEENEY). Glycyl lysine isopeptide (Lys-Gly) (interchain with G-Cter in ubiquitin) cross-links involve residues Lys-461 and Lys-500. Lys-461 participates in a covalent cross-link: (Microbial infection) Glycyl lysine isopeptide (Lys-Gly) (interchain with G-Cter in UFM1). The segment at 476-507 (IQLLEGNPGPPADPDGGPRPQADRKFQEREVP) is disordered. Residues 496–507 (QADRKFQEREVP) show a composition bias toward basic and acidic residues. A helical transmembrane segment spans residues 514–534 (GALWLQVAVTGVLVVTLLVVL). Over 535 to 540 (YRRRLH) the chain is Mitochondrial intermembrane.

As to quaternary structure, self-associates and polymerizes (via CARD domains) to form 400 nM long three-stranded helical filaments on mitochondria, filament nucleation requires interaction with RIGI whose CARD domains act as a template for filament assembly. Interacts with RIGI, IFIH1/MDA5, TRAF2, TRAF6 and C1QBP. May interact with FADD, RIPK1, CHUK and IKBKB. Interacts (when phosphorylated) with IRF3; following activation and phosphorylation on the pLxIS motif by TBK1, recruits IRF3. Interacts with NLRX1. Interaction with NLRX1 requires the CARD domain. Interacts with PSMA7. Interacts with TRAFD1. Interacts (via C-terminus) with PCBP2 in a complex containing MAVS/IPS1, PCBP2 and ITCH. Interacts with CYLD. Interacts with SRC. Interacts with DHX58/LGP2 and IKBKE. Interacts with STING1. Interacts with IFIT3 (via N-terminus). Interacts with TBK1 only in the presence of IFIT3. Interacts with TTLL12; the interaction prevents MAVS binding to TBK1 and IKBKE. Interacts with MUL1. Interacts with ANKRD17. Interacts with NDFIP1. Interacts with SMURF1; the interaction is mediated by NDFIP1 and leads to MAVS ubiquitination and degradation. Interacts with UBXN1; this interaction inhibits MAVS-mediated antiviral pathway. Interacts (via C-terminus) with GPATCH3; the interaction is markedly increased upon viral infection. Directly interacts (via CARD domain) with ATG5 and ATG12, either as ATG5 and ATG12 monomers or as ATG12-ATG5 conjugates. Interacts with DHX33 (via the helicase C-terminal domain). Interacts with DDX3X (via C-terminus); this interaction occurs rapidly, but transiently after Sendai virus infection. The interaction with DDX3X potentiates MAVS-mediated IFNB induction. Conversely inhibition of this interaction, for instance by HCV core protein, prevents MAVS-mediated IFNB induction. Transiently interacts with TRAF3 early during Sendai virus infection. Interacts with CLPB; the interaction is enhanced by Sendai virus infection. Interacts with TRAF3IP3. Interacts with TOMM70; the interaction is enhanced by Sendai virus infection. Interacts with ZNFX1. Interacts with N4BP3; this interaction promotes the polyubiquitination of MAVS. Interacts with TAX1BP1; this interaction induces MAVS polyubiquitination. Interacts with NLRP3; promoting NLRP3 recruitment to mitochondria and activation of the NLRP3 inflammasome. Interacts with ECSIT; this interaction bridges RIGI to the MAVS complex at the mitochondrion. Interacts with UBL7; this interaction promotes MAVS 'Lys-27'-linked ubiquitination leading to type I interferon production. Interacts (via transmembrane domain) with SMIM30/MAVI1 (via transmembrane domain); the interaction disrupts MAVS interaction with RIGI and inhibits MAVS aggregation, resulting in the repression of type I interferon signaling and innate immune responses. (Microbial infection) Interacts with hepatitis C virus (HCV) NS3/4A protease; this interaction leads to MAVS cleavage, thereby preventing the establishment of an antiviral state. In terms of assembly, (Microbial infection) Interacts with hepatitis GB virus B NS3/4A protease; this interaction leads to MAVS cleavage. As to quaternary structure, (Microbial infection) Interacts with human respiratory syncytial virus/HRSV protein NS1; this interaction disrupts MAVS binding to RIGI. (Microbial infection) Interacts with Andes virus Nnon-structural protein NS-S; this interaction may reduce MAVS ubiquitination and leads to inhibition of MAVS-induced type-I IFN signaling pathway. In terms of assembly, (Microbial infection) Interacts with Seneca Valley virus protease 3C; this interaction allows the cleavage of MAVS and subsequent suppression of host innate immunity. As to quaternary structure, (Microbial infection) Interacts with SARS-CoV virus protein ORF9b; this interaction mediates MAVS proteasomal degradation. (Microbial infection) Interacts with SARS-CoV-2 virus protein M; this interaction impairs MAVS self-association and its recruitment of downstream components. In terms of assembly, (Microbial infection) Interacts with foot-and-mouth disease virus protein VP1; this interaction competes with TRAF3 interaction to MAVS leading to suppression of host innate immunity. As to quaternary structure, (Microbial infection) Interacts with Epstein-Barr virus protein BILF1; this interaction mediates MAVS routing from mitochondria to lysosomes. In terms of processing, following activation, phosphorylated by TBK1 at Ser-442 in the pLxIS motif. The phosphorylated pLxIS motif constitutes an IRF3-binding motif, leading to recruitment of the transcription factor IRF3 to induce type-I interferons and other cytokines. Post-translationally, ubiquitinated. Undergoes 'Lys-48'-linked polyubiquitination catalyzed by ITCH; ITCH-dependent polyubiquitination is mediated by the interaction with PCBP2 and leads to MAVS/IPS1 proteasomal degradation. Ubiquitinated by RNF125, leading to its degradation by the proteasome. Undergoes 'Lys-48'-linked ubiquitination catalyzed by SMURF1. Undergoes 'Lys-48'-linked ubiquitination catalyzed by MARCHF5 at Lys-7 and Lys-500, leading to proteasomal degradation. Ubiquitinated via 'Lys-63'-linked ubiquitination at Lys-10, Lys-311 and Lys-461 by UBE2N and TRIM31, promoting MAVS polymerization and formation of three-stranded helical filaments on mitochondria. Undergoes 'Lys-63'-linked ubiquitination leading to enhanced interaction between MAVS and TRAF2. Undergoes 'Lys-27'-linked ubiquitination by TRIM21 leading to enhanced interaction between MAVS and TBK1. Deubiquitinated by USP10 leading to attenuation of RIGI-mediated MAVS aggregation and production of type I interferon. Undergoes 'Lys-48'-linked polyubiquitination catalyzed by RNF115 leading to its degradation. Palmitoylated by ZHDDC4. Palmitoylation promotes MAVS stabilization and activation by inhibiting 'Lys-48'- but facilitating 'Lys-63'-linked ubiquitination. In terms of processing, proteolytically cleaved by apoptotic caspases during apoptosis, leading to its inactivation. Cleavage by CASP3 during virus-induced apoptosis inactivates it, preventing cytokine overproduction. Post-translationally, (Microbial infection) Cleaved and degraded by hepatitis A virus (HAV) protein 3ABC allowing the virus to disrupt the activation of host IRF3 through the MDA5 pathway. (Microbial infection) Cleaved by the protease 2A of coxsackievirus B3, poliovirus and enterovirus 71 allowing the virus to disrupt the host type I interferon production. In terms of processing, (Microbial infection) Cleaved by Seneca Valley virus protease 3C allowing the virus to suppress interferon type-I production. Post-translationally, (Microbial infection) Cleaved by HCV protease NS3/4A, thereby preventing the establishment of an antiviral state. (Microbial infection) UFMylated by ULF1 in association with Epstein-Barr virus BILF1; leading to MAVS routing to the lysosome. Present in T-cells, monocytes, epithelial cells and hepatocytes (at protein level). Ubiquitously expressed, with highest levels in heart, skeletal muscle, liver, placenta and peripheral blood leukocytes.

Its subcellular location is the mitochondrion outer membrane. The protein localises to the mitochondrion. It is found in the peroxisome. Its function is as follows. Adapter required for innate immune defense against viruses. Acts downstream of DHX33, RIGI and IFIH1/MDA5, which detect intracellular dsRNA produced during viral replication, to coordinate pathways leading to the activation of NF-kappa-B, IRF3 and IRF7, and to the subsequent induction of antiviral cytokines such as IFNB and RANTES (CCL5). Peroxisomal and mitochondrial MAVS act sequentially to create an antiviral cellular state. Upon viral infection, peroxisomal MAVS induces the rapid interferon-independent expression of defense factors that provide short-term protection, whereas mitochondrial MAVS activates an interferon-dependent signaling pathway with delayed kinetics, which amplifies and stabilizes the antiviral response. May activate the same pathways following detection of extracellular dsRNA by TLR3. May protect cells from apoptosis. Involved in NLRP3 inflammasome activation by mediating NLRP3 recruitment to mitochondria. The chain is Mitochondrial antiviral-signaling protein from Homo sapiens (Human).